The following is a 414-amino-acid chain: Glutamyl-tRNA reductase (414 aa).

Residues Thr-49–Arg-52, Ser-108, Glu-113–Gln-115, and Gln-119 each bind substrate. Cys-50 serves as the catalytic Nucleophile. An NADP(+)-binding site is contributed by Gly-188–Gly-193.

This sequence belongs to the glutamyl-tRNA reductase family. Homodimer.

It carries out the reaction (S)-4-amino-5-oxopentanoate + tRNA(Glu) + NADP(+) = L-glutamyl-tRNA(Glu) + NADPH + H(+). It participates in porphyrin-containing compound metabolism; protoporphyrin-IX biosynthesis; 5-aminolevulinate from L-glutamyl-tRNA(Glu): step 1/2. In terms of biological role, catalyzes the NADPH-dependent reduction of glutamyl-tRNA(Glu) to glutamate 1-semialdehyde (GSA). The chain is Glutamyl-tRNA reductase from Francisella tularensis subsp. tularensis (strain WY96-3418).